Here is a 248-residue protein sequence, read N- to C-terminus: Triosephosphate isomerase (248 aa).

Residues N10 and K12 each coordinate substrate. H95 serves as the catalytic Electrophile. E165 serves as the catalytic Proton acceptor.

This sequence belongs to the triosephosphate isomerase family. Homodimer.

The enzyme catalyses D-glyceraldehyde 3-phosphate = dihydroxyacetone phosphate. It participates in carbohydrate biosynthesis; gluconeogenesis. It functions in the pathway carbohydrate degradation; glycolysis; D-glyceraldehyde 3-phosphate from glycerone phosphate: step 1/1. The sequence is that of Triosephosphate isomerase (tpi-1) from Neurospora crassa (strain ATCC 24698 / 74-OR23-1A / CBS 708.71 / DSM 1257 / FGSC 987).